A 525-amino-acid chain; its full sequence is Alcohol O-acetyltransferase 1 (525 aa).

A membrane association region spans residues 24 to 41; that stretch reads GHARRMGSVEDLYVALNR. Active-site charge relay system residues include His-191 and Asp-195. The tract at residues 508–525 is membrane association; it reads QESLEELCSIYKALLLGP.

The protein belongs to the ATF1 alcohol acetyltransferase family.

It is found in the lipid droplet. Its subcellular location is the endoplasmic reticulum membrane. It catalyses the reaction an aliphatic alcohol + acetyl-CoA = an acetyl ester + CoA. It carries out the reaction a fatty acyl-CoA + H2O = a fatty acid + CoA + H(+). The enzyme catalyses 3-methylbutanol + acetyl-CoA = 3-methylbutyl acetate + CoA. Found to be inhibited by cadmium, copper, zinc and mercurium divalent cations and sulfhydryl reagents. Inhibited by the addition of unsaturated fatty acids to the culture. Major alcohol O-acetyltransferase that uses acetyl-CoA to synthesize acetate esters from various alcohols, producing ethyl acetate, isoamyl acetate, isobutyl acetate, butyl acetate, hexyl acetate, heptyl acetate and octyl acetate. The alcohol acyltransferase activity is promiscuous with regard to alcohol but relatively specific for acetyl-CoA since ATF1 does not use any other acyl-CoAs (C3, C4, C5, C6, C8, C10, C12). Acts also as an efficient thioesterase in vitro with specificity towards medium-chain-length acyl-CoAs. In natural environments, the production of aromatic volatile metabolites promotes dispersal through insect vectors. The sequence is that of Alcohol O-acetyltransferase 1 from Saccharomyces cerevisiae (strain ATCC 204508 / S288c) (Baker's yeast).